A 516-amino-acid chain; its full sequence is MFSVFGLSIPISATELLLASATFCLVFWVVRAWQPRVPKGLKSPPGPWSWPLIGHVLTLGKSPHLALSRLSQRYGDVLQIRIGCTPVLVLSGLDTIRQALVRQGDDFKGRPDLYSFTLVADGQSMTFNPDSGPVWAARRRLAQNALKSFSIASDPASSSSCYLEEHVSKESEYLIGKFQELMAGSGRFDPYRYVVVSVANVICAMCFGRRYDHESQVLLSVVGLSNEFGAVAASGNPADFIPILRYLPNTALDDFKDLNRRFYIFMQKMLKEHYKTFEKGRIRDITDSLIEHCQGKRLDENANIQLSDEKIVNVVMDLFGAGFDTVTTAISWSLMYLVTSPSVQKKIQEELDTVIGSARQPRLSDRPRLPYLEAFILETFRHSSFLPFTIPHSTTRDTSLNGFYIPKGRCVFVNQWQINHDQKLWDDPSAFWPERFLTADGTINKALSEKVILFGLGKRKCIGETIARWEVFLFLAILLQQVEFRVTPGVKVDMTPVYGLTMKHAHCEHFQAHMRS.

The tract at residues 33–44 (WQPRVPKGLKSP) is mitochondrial targeting signal. Residue Ser71 is glycosylated (O-linked (GlcNAc) serine). Phe228 serves as a coordination point for substrate. Cys461 provides a ligand contact to heme.

This sequence belongs to the cytochrome P450 family. As to quaternary structure, interacts with cytosolic chaperones HSP70 and HSP90; this interaction is required for initial targeting to mitochondria. Interacts (via mitochondrial targeting signal) with TOMM40 (via N-terminus); this interaction is required for translocation across the mitochondrial outer membrane. It depends on heme as a cofactor.

The protein localises to the endoplasmic reticulum membrane. It is found in the mitochondrion inner membrane. The protein resides in the microsome membrane. It localises to the cytoplasm. The enzyme catalyses an organic molecule + reduced [NADPH--hemoprotein reductase] + O2 = an alcohol + oxidized [NADPH--hemoprotein reductase] + H2O + H(+). The catalysed reaction is estrone + reduced [NADPH--hemoprotein reductase] + O2 = 2-hydroxyestrone + oxidized [NADPH--hemoprotein reductase] + H2O + H(+). It catalyses the reaction estrone + reduced [NADPH--hemoprotein reductase] + O2 = 4-hydroxyestrone + oxidized [NADPH--hemoprotein reductase] + H2O + H(+). It carries out the reaction estrone + reduced [NADPH--hemoprotein reductase] + O2 = 6alpha-hydroxyestrone + oxidized [NADPH--hemoprotein reductase] + H2O + H(+). The enzyme catalyses estrone + reduced [NADPH--hemoprotein reductase] + O2 = 15alpha-hydroxyestrone + oxidized [NADPH--hemoprotein reductase] + H2O + H(+). The catalysed reaction is estrone + reduced [NADPH--hemoprotein reductase] + O2 = 16alpha-hydroxyestrone + oxidized [NADPH--hemoprotein reductase] + H2O + H(+). It catalyses the reaction 17beta-estradiol + reduced [NADPH--hemoprotein reductase] + O2 = 2-hydroxy-17beta-estradiol + oxidized [NADPH--hemoprotein reductase] + H2O + H(+). It carries out the reaction 17beta-estradiol + reduced [NADPH--hemoprotein reductase] + O2 = 4-hydroxy-17beta-estradiol + oxidized [NADPH--hemoprotein reductase] + H2O + H(+). The enzyme catalyses 17beta-estradiol + reduced [NADPH--hemoprotein reductase] + O2 = 6alpha-hydroxy-17beta-estradiol + oxidized [NADPH--hemoprotein reductase] + H2O + H(+). The catalysed reaction is 17beta-estradiol + reduced [NADPH--hemoprotein reductase] + O2 = 7alpha-hydroxy-17beta-estradiol + oxidized [NADPH--hemoprotein reductase] + H2O + H(+). It catalyses the reaction 17beta-estradiol + reduced [NADPH--hemoprotein reductase] + O2 = 15alpha-hydroxy-17beta-estradiol + oxidized [NADPH--hemoprotein reductase] + H2O + H(+). It carries out the reaction (5Z,8Z,11Z)-eicosatrienoate + reduced [NADPH--hemoprotein reductase] + O2 = 19-hydroxy-(5Z,8Z,11Z)-eicosatrienoate + oxidized [NADPH--hemoprotein reductase] + H2O + H(+). The enzyme catalyses (5Z,8Z,11Z,14Z)-eicosatetraenoate + reduced [NADPH--hemoprotein reductase] + O2 = 16-hydroxy-(5Z,8Z,11Z,14Z)-eicosatetraenoate + oxidized [NADPH--hemoprotein reductase] + H2O + H(+). The catalysed reaction is (5Z,8Z,11Z,14Z)-eicosatetraenoate + reduced [NADPH--hemoprotein reductase] + O2 = 17-hydroxy-(5Z,8Z,11Z,14Z)-eicosatetraenoate + oxidized [NADPH--hemoprotein reductase] + H2O + H(+). It catalyses the reaction (5Z,8Z,11Z,14Z)-eicosatetraenoate + reduced [NADPH--hemoprotein reductase] + O2 = 18-hydroxy-(5Z,8Z,11Z,14Z)-eicosatetraenoate + oxidized [NADPH--hemoprotein reductase] + H2O + H(+). It carries out the reaction (5Z,8Z,11Z,14Z)-eicosatetraenoate + reduced [NADPH--hemoprotein reductase] + O2 = 19-hydroxy-(5Z,8Z,11Z,14Z)-eicosatetraenoate + oxidized [NADPH--hemoprotein reductase] + H2O + H(+). The enzyme catalyses (5Z,8Z,11Z,14Z,17Z)-eicosapentaenoate + reduced [NADPH--hemoprotein reductase] + O2 = 19-hydroxy-(5Z,8Z,11Z,14Z,17Z)-eicosapentaenoate + oxidized [NADPH--hemoprotein reductase] + H2O + H(+). The catalysed reaction is (5Z,8Z,11Z,14Z)-eicosatetraenoate + reduced [NADPH--hemoprotein reductase] + O2 = (8R,9S)-epoxy-(5Z,11Z,14Z)-eicosatrienoate + oxidized [NADPH--hemoprotein reductase] + H2O + H(+). It catalyses the reaction (5Z,8Z,11Z,14Z)-eicosatetraenoate + reduced [NADPH--hemoprotein reductase] + O2 = (11R,12S)-epoxy-(5Z,8Z,14Z)-eicosatrienoate + oxidized [NADPH--hemoprotein reductase] + H2O + H(+). It carries out the reaction (5Z,8Z,11Z,14Z)-eicosatetraenoate + reduced [NADPH--hemoprotein reductase] + O2 = (14S,15R)-epoxy-(5Z,8Z,11Z)-eicosatrienoate + oxidized [NADPH--hemoprotein reductase] + H2O + H(+). The enzyme catalyses (5Z,8Z,11Z,14Z)-eicosatetraenoate + reduced [NADPH--hemoprotein reductase] + O2 = (14R,15S)-epoxy-(5Z,8Z,11Z)-eicosatrienoate + oxidized [NADPH--hemoprotein reductase] + H2O + H(+). The catalysed reaction is (5Z,8Z,11Z,14Z,17Z)-eicosapentaenoate + reduced [NADPH--hemoprotein reductase] + O2 = (17R,18S)-epoxy-(5Z,8Z,11Z,14Z)-eicosatetraenoate + oxidized [NADPH--hemoprotein reductase] + H2O + H(+). It catalyses the reaction (4Z,7Z,10Z,13Z,16Z,19Z)-docosahexaenoate + reduced [NADPH--hemoprotein reductase] + O2 = (19S,20R)-epoxy-(4Z,7Z,10Z,13Z,16Z)-docosapentaenoate + oxidized [NADPH--hemoprotein reductase] + H2O + H(+). It carries out the reaction (4Z,7Z,10Z,13Z,16Z,19Z)-docosahexaenoate + reduced [NADPH--hemoprotein reductase] + O2 = (19R,20S)-epoxy-(4Z,7Z,10Z,13Z,16Z)-docosapentaenoate + oxidized [NADPH--hemoprotein reductase] + H2O + H(+). The enzyme catalyses all-trans-retinol + reduced [NADPH--hemoprotein reductase] + O2 = all-trans-retinal + oxidized [NADPH--hemoprotein reductase] + 2 H2O + H(+). The catalysed reaction is all-trans-retinal + reduced [NADPH--hemoprotein reductase] + O2 = all-trans-retinoate + oxidized [NADPH--hemoprotein reductase] + H2O + 2 H(+). It catalyses the reaction (13S)-hydroperoxy-(9Z,11E)-octadecadienoate = 13-oxo-(9Z,11E)-octadecadienoate + H2O. It carries out the reaction (12S)-hydroperoxy-(5Z,8Z,10E,14Z)-eicosatetraenoate = 12-oxo-(5Z,8Z,10E,14Z)-eicosatetraenoate + H2O. The enzyme catalyses (15S)-hydroperoxy-(5Z,8Z,11Z,13E)-eicosatetraenoate = 15-oxo-(5Z,8Z,11Z,13E)-eicosatetraenoate + H2O. The catalysed reaction is (5S)-hydroperoxy-(6E,8Z,11Z,14Z)-eicosatetraenoate = 5-oxo-(6E,8Z,11Z,14Z)-eicosatetraenoate + H2O. Its pathway is steroid hormone biosynthesis. It participates in lipid metabolism; fatty acid metabolism. It functions in the pathway cofactor metabolism; retinol metabolism. A cytochrome P450 monooxygenase involved in the metabolism of various endogenous substrates, including fatty acids, steroid hormones and vitamins. Mechanistically, uses molecular oxygen inserting one oxygen atom into a substrate, and reducing the second into a water molecule, with two electrons provided by NADPH via cytochrome P450 reductase (CPR; NADPH-ferrihemoprotein reductase). Catalyzes the hydroxylation of carbon-hydrogen bonds. Exhibits high catalytic activity for the formation of hydroxyestrogens from estrone (E1) and 17beta-estradiol (E2), namely 2-hydroxy E1 and E2, as well as D-ring hydroxylated E1 and E2 at the C15alpha and C16alpha positions. Displays different regioselectivities for polyunsaturated fatty acids (PUFA) hydroxylation. Catalyzes the epoxidation of double bonds of certain PUFA. Converts arachidonic acid toward epoxyeicosatrienoic acid (EET) regioisomers, 8,9-, 11,12-, and 14,15-EET, that function as lipid mediators in the vascular system. Displays an absolute stereoselectivity in the epoxidation of eicosapentaenoic acid (EPA) producing the 17(R),18(S) enantiomer. May play an important role in all-trans retinoic acid biosynthesis in extrahepatic tissues. Catalyzes two successive oxidative transformation of all-trans retinol to all-trans retinal and then to the active form all-trans retinoic acid. May also participate in eicosanoids metabolism by converting hydroperoxide species into oxo metabolites (lipoxygenase-like reaction, NADPH-independent). The sequence is that of Cytochrome P450 1A1 (CYP1A1) from Balaenoptera acutorostrata (Common minke whale).